Consider the following 251-residue polypeptide: Retinoic acid early-inducible protein 1-epsilon (251 aa).

The N-terminal stretch at 1-28 (MAKAAVTKRHHFMIQKLLILLSYGYTNG) is a signal peptide. The cysteines at positions 37 and 56 are disulfide-linked. Residues asparagine 38, asparagine 70, asparagine 83, asparagine 141, and asparagine 154 are each glycosylated (N-linked (GlcNAc...) asparagine). A disulfide bridge links cysteine 88 with cysteine 188. A disordered region spans residues 196–228 (LKQSKEKPRSTSRSPSITQLTSTSPLPPPSHST). The segment covering 209-219 (SPSITQLTSTS) has biased composition (low complexity). Serine 225 is lipidated: GPI-anchor amidated serine. Positions 226 to 251 (HSTSKKGFISVGLIFISLLFAFAFAM) are cleaved as a propeptide — removed in mature form.

It belongs to the NKG2D ligand family. Glycosylated.

It localises to the cell membrane. Acts as a ligand for KLRK1. The protein is Retinoic acid early-inducible protein 1-epsilon (Raet1e) of Mus musculus (Mouse).